Reading from the N-terminus, the 295-residue chain is ATP synthase gamma chain (295 aa).

This sequence belongs to the ATPase gamma chain family. In terms of assembly, F-type ATPases have 2 components, CF(1) - the catalytic core - and CF(0) - the membrane proton channel. CF(1) has five subunits: alpha(3), beta(3), gamma(1), delta(1), epsilon(1). CF(0) has three main subunits: a, b and c.

The protein resides in the cell inner membrane. Produces ATP from ADP in the presence of a proton gradient across the membrane. The gamma chain is believed to be important in regulating ATPase activity and the flow of protons through the CF(0) complex. The polypeptide is ATP synthase gamma chain (Campylobacter concisus (strain 13826)).